A 130-amino-acid polypeptide reads, in one-letter code: Iron-sulfur cluster insertion protein ErpA (130 aa).

Iron-sulfur cluster is bound by residues Cys58, Cys122, and Cys124.

This sequence belongs to the HesB/IscA family. In terms of assembly, homodimer. Iron-sulfur cluster serves as cofactor.

Its function is as follows. Required for insertion of 4Fe-4S clusters for at least IspG. This chain is Iron-sulfur cluster insertion protein ErpA, found in Stenotrophomonas maltophilia (strain K279a).